Here is a 384-residue protein sequence, read N- to C-terminus: Secreted LysM effector LysM14 (384 aa).

A signal peptide spans M1–A35. The LysM domain occupies Y64 to L112. The interval S185–T220 is disordered.

Belongs to the secreted LysM effector family.

It is found in the secreted. Secreted LysM effector that might have a role in sequestration of chitin oligosaccharides (breakdown products of fungal cell walls that are released during invasion and act as triggers of host immunity) to dampen host defense. This Penicillium expansum (Blue mold rot fungus) protein is Secreted LysM effector LysM14.